The chain runs to 180 residues: ATP-dependent protease subunit HslV (180 aa).

Residue threonine 5 is part of the active site. Residues glycine 165, cysteine 168, and threonine 171 each contribute to the Na(+) site.

This sequence belongs to the peptidase T1B family. HslV subfamily. In terms of assembly, a double ring-shaped homohexamer of HslV is capped on each side by a ring-shaped HslU homohexamer. The assembly of the HslU/HslV complex is dependent on binding of ATP.

Its subcellular location is the cytoplasm. It catalyses the reaction ATP-dependent cleavage of peptide bonds with broad specificity.. Its activity is regulated as follows. Allosterically activated by HslU binding. Protease subunit of a proteasome-like degradation complex believed to be a general protein degrading machinery. In Helicobacter pylori (strain HPAG1), this protein is ATP-dependent protease subunit HslV.